We begin with the raw amino-acid sequence, 253 residues long: Kojic acid related protein 1 (253 aa).

3 consecutive transmembrane segments (helical) span residues 23 to 43 (PIKF…FILI), 53 to 73 (IFYP…YIVS), and 117 to 137 (ALFG…IVSV). Positions 174-253 (FPMMSPALPS…PPPPKKAAKV (80 aa)) are disordered. Polar residues-rich tracts occupy residues 184-200 (GGTT…SPEF) and 226-240 (QQES…NQPQ). Positions 242–253 (YFPPPPKKAAKV) are enriched in pro residues.

The protein resides in the membrane. Functionally, involved in mycelium growth and repression of conidia formation by affecting the expression of brlA and abaA. Acts as a negative regulation factor for kojic acid production through affecting the expression of kojA, kojR and kojT. The chain is Kojic acid related protein 1 from Aspergillus oryzae (strain ATCC 42149 / RIB 40) (Yellow koji mold).